The following is a 337-amino-acid chain: Large ribosomal subunit protein uL3 (337 aa).

The segment at 1 to 32 (MAKGHRPRRGSLAYSPRKRSQSHIPRFRSWPE) is disordered.

Belongs to the universal ribosomal protein uL3 family. In terms of assembly, part of the 50S ribosomal subunit. Forms a cluster with proteins L14 and L24e.

Functionally, one of the primary rRNA binding proteins, it binds directly near the 3'-end of the 23S rRNA, where it nucleates assembly of the 50S subunit. The polypeptide is Large ribosomal subunit protein uL3 (Methanococcoides burtonii (strain DSM 6242 / NBRC 107633 / OCM 468 / ACE-M)).